A 475-amino-acid polypeptide reads, in one-letter code: Legumain (475 aa).

The first 15 residues, 1 to 15 (MVMMLVMLSLHGTAA), serve as a signal peptide directing secretion. The propeptide occupies 16–35 (RLNRREWDSVIQLPTEPVDD). His158 is a catalytic residue. Cys200 (nucleophile) is an active-site residue. Residues Cys233 and Cys247 are joined by a disulfide bond. N-linked (GlcNAc...) asparagine glycosylation is present at Asn300. Intrachain disulfides connect Cys411-Cys441 and Cys423-Cys458.

This sequence belongs to the peptidase C13 family. As to quaternary structure, homodimer.

It carries out the reaction Hydrolysis of proteins and small molecule substrates at -Asn-|-Xaa- bonds.. With respect to regulation, repressed by various protease inhibitors including p-chloromercuribenzene sulfonic acid (PCMBS), N-ethylmaleimide, kininogen, elastatinal, cystatin EW and leupeptin. Its function is as follows. Asparaginyl endopeptidase able to cleave almost all peptide bonds on the carboxyl side of Asn residues, except at the NH2 terminus or second position or with N-glycosylated Asn. Responsible for the maturation (circular permutation) of concanavalin A from its precursor, by performing both cleavage and cleavage-coupled transpeptidation to form conA. The chain is Legumain from Canavalia ensiformis (Jack bean).